A 318-amino-acid chain; its full sequence is Probable casein kinase I homolog ECU11_1980 (318 aa).

The 269-residue stretch at 8–276 (YTICREIGKG…YLNSLLDKIF (269 aa)) folds into the Protein kinase domain. Residues 14 to 22 (IGKGGFGKV) and Lys-37 each bind ATP. Asp-129 (proton acceptor) is an active-site residue.

This sequence belongs to the protein kinase superfamily. CK1 Ser/Thr protein kinase family. Casein kinase I subfamily.

It is found in the nucleus. The enzyme catalyses L-seryl-[protein] + ATP = O-phospho-L-seryl-[protein] + ADP + H(+). It catalyses the reaction L-threonyl-[protein] + ATP = O-phospho-L-threonyl-[protein] + ADP + H(+). Functionally, involved in DNA repair. May regulate the activity of protein(s) involved in double strand break repair caused by gamma rays. The polypeptide is Probable casein kinase I homolog ECU11_1980 (Encephalitozoon cuniculi (strain GB-M1) (Microsporidian parasite)).